The following is a 201-amino-acid chain: MYRAGVTLLVVAVVSFGRWDSVTVATTIRVGWWYEPQVKMAYIYEHNDTNLTIFCNTTAYDSPFLASGMMIVLPHRTQFLTRKVNYSEDMENIKQNYTHQLTHMLTGEPGTYVNGSVTCWGSNGTFGAGTFIVRSMVNKTAGNTNTFIHFVEDSELVENPAYFRRSDHRAFMIVILTQVVFVVFIINASFIWSWTFRRHKR.

An N-terminal signal peptide occupies residues 1–25 (MYRAGVTLLVVAVVSFGRWDSVTVA). At 26–170 (TTIRVGWWYE…AYFRRSDHRA (145 aa)) the chain is on the extracellular side. N-linked (GlcNAc...) asparagine; by host glycosylation is found at Asn47, Asn50, Asn56, Asn85, Asn96, Asn114, Asn123, and Asn138. A helical transmembrane segment spans residues 171 to 191 (FMIVILTQVVFVVFIINASFI). Over 192–201 (WSWTFRRHKR) the chain is Cytoplasmic.

This sequence belongs to the HHV-5 UL120 protein family.

The protein localises to the host membrane. This is Membrane protein UL120 (UL120) from Human cytomegalovirus (strain Merlin) (HHV-5).